The chain runs to 406 residues: Tryptophan synthase beta chain (406 aa).

N6-(pyridoxal phosphate)lysine is present on K97.

It belongs to the TrpB family. As to quaternary structure, tetramer of two alpha and two beta chains. Pyridoxal 5'-phosphate serves as cofactor.

The enzyme catalyses (1S,2R)-1-C-(indol-3-yl)glycerol 3-phosphate + L-serine = D-glyceraldehyde 3-phosphate + L-tryptophan + H2O. The protein operates within amino-acid biosynthesis; L-tryptophan biosynthesis; L-tryptophan from chorismate: step 5/5. In terms of biological role, the beta subunit is responsible for the synthesis of L-tryptophan from indole and L-serine. The sequence is that of Tryptophan synthase beta chain from Lacticaseibacillus paracasei (strain ATCC 334 / BCRC 17002 / CCUG 31169 / CIP 107868 / KCTC 3260 / NRRL B-441) (Lactobacillus paracasei).